Reading from the N-terminus, the 274-residue chain is Proto-oncogene FRAT1 (274 aa).

Disordered regions lie at residues 1 to 24, 55 to 107, 132 to 194, and 232 to 274; these read MPCR…DDSF, AHDR…PGAV, GASA…DDPH, and GPLS…VPGS. Over residues 7 to 23 the composition is skewed to acidic residues; it reads EEEEAGDEAEGEEDDDS. The tract at residues 191-214 is involved in GSK-3 binding; it reads DDPHRLLQQLVLSGNLIKEAVRRL. S243 and S246 each carry phosphoserine.

This sequence belongs to the GSK-3-binding protein family. As to quaternary structure, binds DVL1. Binds GSK-3 and prevent GSK-3-dependent phosphorylation. Phosphorylated. In terms of tissue distribution, highly expressed in testis. Lower level of expression in spleen, thymus and brain.

The protein resides in the cytoplasm. Functionally, positively regulates the Wnt signaling pathway by stabilizing beta-catenin through the association with GSK-3. May play a role in tumor progression and collaborate with PIM1 and MYC in lymphomagenesis. In Mus musculus (Mouse), this protein is Proto-oncogene FRAT1 (Frat1).